We begin with the raw amino-acid sequence, 391 residues long: Phosphoglycerate kinase (391 aa).

Residues 21–23, arginine 36, 59–62, arginine 113, and arginine 146 contribute to the substrate site; these read DLN and HLGR. ATP contacts are provided by residues lysine 197, glutamate 319, and 345–348; that span reads GGDT.

It belongs to the phosphoglycerate kinase family. Monomer.

The protein localises to the cytoplasm. It catalyses the reaction (2R)-3-phosphoglycerate + ATP = (2R)-3-phospho-glyceroyl phosphate + ADP. The protein operates within carbohydrate degradation; glycolysis; pyruvate from D-glyceraldehyde 3-phosphate: step 2/5. The sequence is that of Phosphoglycerate kinase from Xanthomonas campestris pv. campestris (strain 8004).